A 470-amino-acid polypeptide reads, in one-letter code: ATP synthase subunit beta (470 aa).

157–164 (GGAGVGKT) lines the ATP pocket.

The protein belongs to the ATPase alpha/beta chains family. As to quaternary structure, F-type ATPases have 2 components, CF(1) - the catalytic core - and CF(0) - the membrane proton channel. CF(1) has five subunits: alpha(3), beta(3), gamma(1), delta(1), epsilon(1). CF(0) has three main subunits: a(1), b(2) and c(9-12). The alpha and beta chains form an alternating ring which encloses part of the gamma chain. CF(1) is attached to CF(0) by a central stalk formed by the gamma and epsilon chains, while a peripheral stalk is formed by the delta and b chains.

The protein resides in the cell inner membrane. The enzyme catalyses ATP + H2O + 4 H(+)(in) = ADP + phosphate + 5 H(+)(out). Its function is as follows. Produces ATP from ADP in the presence of a proton gradient across the membrane. The catalytic sites are hosted primarily by the beta subunits. This is ATP synthase subunit beta from Geobacter sulfurreducens (strain ATCC 51573 / DSM 12127 / PCA).